Consider the following 678-residue polypeptide: Probable N-methylproline demethylase (678 aa).

FMN is bound by residues Gly59, Gln102, Arg220, Lys299, and 321–322 (TR). 3 residues coordinate [4Fe-4S] cluster: Cys345, Cys351, and Cys363. Residues Ala396, Glu415, Gln423, Arg433, and Ala460 each coordinate FAD.

This sequence in the N-terminal section; belongs to the NADH:flavin oxidoreductase/NADH oxidase family. It depends on FMN as a cofactor. FAD serves as cofactor. The cofactor is [4Fe-4S] cluster.

It carries out the reaction N-methyl-L-proline + NAD(+) + H2O = L-proline + formaldehyde + NADH + H(+). Its pathway is amine and polyamine degradation; stachydrine degradation. Its function is as follows. Possible NADH-dependent oxidase, may function as a demethylase that converts N-methylproline to proline. The sequence is that of Probable N-methylproline demethylase from Rhizobium meliloti (strain 1021) (Ensifer meliloti).